The chain runs to 204 residues: MGAYKYMQELWRKKQSDVMRFLLRVRCWQYRQLSALHRAPRPTRPDKARRLGYKAKQGYVIYRVRVRRGGRKRPVPKGATYGKPVHHGVNQLKFARSLQSVAEERAGRHCGGLRVLNSYWVGEDSTYKFFEVILIDTFHKAIRRNPDTQWITKAVHKHREMRGLTSAGKKSRGLGKGHKFHLTIGGSRRAPWRRRNTLQLRRYR.

Residues 161–180 (MRGLTSAGKKSRGLGKGHKF) form a disordered region. A compositionally biased stretch (basic residues) spans 169 to 180 (KKSRGLGKGHKF).

This sequence belongs to the eukaryotic ribosomal protein eL15 family. In terms of assembly, component of the large ribosomal subunit.

The protein resides in the cytoplasm. Functionally, component of the large ribosomal subunit. The ribosome is a large ribonucleoprotein complex responsible for the synthesis of proteins in the cell. The chain is Large ribosomal subunit protein eL15 (rpl15) from Ictalurus punctatus (Channel catfish).